Reading from the N-terminus, the 111-residue chain is Natriuretic peptide TNP-b (111 aa).

A signal peptide spans 1 to 27 (MVGLSRLAGGGLLLLLLLALLPLALDG). A propeptide spanning residues 28–71 (KPAPLPQALPEALAGGTTALRRDVTEEQQQQLVAEESSGPAAGR) is cleaved from the precursor. 2 disordered regions span residues 51–77 (VTEE…PKIG) and 92–111 (SGLG…PGGS). Cysteines 80 and 96 form a disulfide. Positions 107 to 111 (IPGGS) are excised as a propeptide.

The protein belongs to the natriuretic peptide family. As to expression, expressed by the venom gland.

Its subcellular location is the secreted. Its function is as follows. Snake venom natriuretic peptide that exhibits vasoactive and probable hypotensive activity. Is only weakly active on natriuretic peptide receptor-C (NPR3). The sequence is that of Natriuretic peptide TNP-b from Oxyuranus scutellatus scutellatus (Australian taipan).